A 443-amino-acid chain; its full sequence is 23S rRNA (uracil(1939)-C(5))-methyltransferase RlmD (443 aa).

One can recognise a TRAM domain in the interval 10-68 (RVTTKQTLTVTVNSLDPFGQGVAHHQGKAIFIPGALPGEQAEIELTEQKRQYSRGKLKR). [4Fe-4S] cluster is bound by residues Cys-81, Cys-87, Cys-90, and Cys-168. The S-adenosyl-L-methionine site is built by Gln-271, Phe-300, Asn-305, Glu-321, Asn-348, and Asp-369. The Nucleophile role is filled by Cys-395.

It belongs to the class I-like SAM-binding methyltransferase superfamily. RNA M5U methyltransferase family. RlmD subfamily.

It catalyses the reaction uridine(1939) in 23S rRNA + S-adenosyl-L-methionine = 5-methyluridine(1939) in 23S rRNA + S-adenosyl-L-homocysteine + H(+). Catalyzes the formation of 5-methyl-uridine at position 1939 (m5U1939) in 23S rRNA. This chain is 23S rRNA (uracil(1939)-C(5))-methyltransferase RlmD, found in Yersinia enterocolitica serotype O:8 / biotype 1B (strain NCTC 13174 / 8081).